The following is a 463-amino-acid chain: Glutamyl-tRNA(Gln) amidotransferase subunit A, mitochondrial (463 aa).

Active-site charge relay system residues include lysine 47 and serine 124. Serine 148 acts as the Acyl-ester intermediate in catalysis.

This sequence belongs to the amidase family. GatA subfamily. Subunit of the heterotrimeric GatFAB amidotransferase (AdT) complex, composed of A, B and F subunits.

The protein localises to the mitochondrion. It carries out the reaction L-glutamyl-tRNA(Gln) + L-glutamine + ATP + H2O = L-glutaminyl-tRNA(Gln) + L-glutamate + ADP + phosphate + H(+). Functionally, allows the formation of correctly charged Gln-tRNA(Gln) through the transamidation of misacylated Glu-tRNA(Gln) in the mitochondria. The reaction takes place in the presence of glutamine and ATP through an activated gamma-phospho-Glu-tRNA(Gln). The polypeptide is Glutamyl-tRNA(Gln) amidotransferase subunit A, mitochondrial (Eremothecium gossypii (strain ATCC 10895 / CBS 109.51 / FGSC 9923 / NRRL Y-1056) (Yeast)).